The sequence spans 86 residues: Small ribosomal subunit protein bS20 (86 aa).

Belongs to the bacterial ribosomal protein bS20 family.

In terms of biological role, binds directly to 16S ribosomal RNA. This is Small ribosomal subunit protein bS20 from Bifidobacterium longum (strain DJO10A).